Consider the following 3218-residue polypeptide: Serine/threonine-protein kinase Smg1 (3218 aa).

Positions 32-78 (LNNNGNHGDSSNEGGGGNGSGRGGATGSGNIAGLGGSESMWSPGGGK) are disordered. The span at 33 to 43 (NNNGNHGDSSN) shows a compositional bias: low complexity. A compositionally biased stretch (gly residues) spans 44 to 67 (EGGGGNGSGRGGATGSGNIAGLGG). The residue at position 70 (serine 70) is a Phosphoserine. Residues 1289–1692 (DAAAAAREEG…IFPAVVGANR (404 aa)) enclose the FAT domain. An HEAT repeat occupies 1643–1678 (APWKVIIPQLFSRLNHHEPYVRKSVCDLLCRLAKSR). A PI3K/PI4K catalytic domain is found at 1897–2232 (VESSVCVLPT…LGVGDLKYHK (336 aa)). The G-loop stretch occupies residues 1903-1909 (VLPTKTK). The tract at residues 2101–2109 (GLGDRHLDN) is catalytic loop. The interval 2121–2145 (HIDYNVCFEKGRTLRIPEKVPFRLT) is activation loop. The region spanning 3186–3218 (QRSTVAEQVDYVIREACNPENLAVLYEGWTPWV) is the FATC domain.

The protein belongs to the PI3/PI4-kinase family. As to quaternary structure, component of a post-splicing multiprotein NMD complex. Requires Mn(2+) as cofactor.

The protein resides in the cytoplasm. It catalyses the reaction L-seryl-[protein] + ATP = O-phospho-L-seryl-[protein] + ADP + H(+). The enzyme catalyses L-threonyl-[protein] + ATP = O-phospho-L-threonyl-[protein] + ADP + H(+). Its function is as follows. Serine/threonine protein kinase involved in mRNA surveillance. Recognizes the substrate consensus sequence [ST]-Q. Involved in nonsense-mediated decay (NMD) of mRNAs containing premature stop codons, probably by phosphorylating Upf1. The sequence is that of Serine/threonine-protein kinase Smg1 (nonC) from Drosophila melanogaster (Fruit fly).